A 217-amino-acid polypeptide reads, in one-letter code: Superoxide dismutase [Cu-Zn], chloroplastic (217 aa).

A chloroplast-targeting transit peptide spans 1 to 63 (MAAHSIFTTT…TTPKPLTVFA (63 aa)). The Cu cation site is built by H109, H111, and H126. A disulfide bond links C120 and C209. 4 residues coordinate Zn(2+): H126, H134, H143, and D146. H183 lines the Cu cation pocket.

It belongs to the Cu-Zn superoxide dismutase family. In terms of assembly, homotetramer. Cu cation is required as a cofactor. Zn(2+) serves as cofactor.

It localises to the plastid. The protein resides in the chloroplast. It carries out the reaction 2 superoxide + 2 H(+) = H2O2 + O2. In terms of biological role, destroys radicals which are normally produced within the cells and which are toxic to biological systems. The protein is Superoxide dismutase [Cu-Zn], chloroplastic (SODCP.2) of Solanum lycopersicum (Tomato).